The chain runs to 170 residues: tRNA-splicing endonuclease (170 aa).

Catalysis depends on residues Tyr-110, His-116, and Lys-147.

It belongs to the tRNA-intron endonuclease family. Archaeal short subfamily. In terms of assembly, homotetramer; although the tetramer contains four active sites, only two participate in the cleavage. Therefore, it should be considered as a dimer of dimers.

The catalysed reaction is pretRNA = a 3'-half-tRNA molecule with a 5'-OH end + a 5'-half-tRNA molecule with a 2',3'-cyclic phosphate end + an intron with a 2',3'-cyclic phosphate and a 5'-hydroxyl terminus.. In terms of biological role, endonuclease that removes tRNA introns. Cleaves pre-tRNA at the 5'- and 3'-splice sites to release the intron. The products are an intron and two tRNA half-molecules bearing 2',3' cyclic phosphate and 5'-OH termini. Recognizes a pseudosymmetric substrate in which 2 bulged loops of 3 bases are separated by a stem of 4 bp. The polypeptide is tRNA-splicing endonuclease (Pyrococcus abyssi (strain GE5 / Orsay)).